A 399-amino-acid polypeptide reads, in one-letter code: Tryptophan synthase beta chain (399 aa).

K91 bears the N6-(pyridoxal phosphate)lysine mark.

It belongs to the TrpB family. Tetramer of two alpha and two beta chains. Pyridoxal 5'-phosphate is required as a cofactor.

The enzyme catalyses (1S,2R)-1-C-(indol-3-yl)glycerol 3-phosphate + L-serine = D-glyceraldehyde 3-phosphate + L-tryptophan + H2O. It functions in the pathway amino-acid biosynthesis; L-tryptophan biosynthesis; L-tryptophan from chorismate: step 5/5. Functionally, the beta subunit is responsible for the synthesis of L-tryptophan from indole and L-serine. This chain is Tryptophan synthase beta chain, found in Shouchella clausii (strain KSM-K16) (Alkalihalobacillus clausii).